A 466-amino-acid polypeptide reads, in one-letter code: Arginine biosynthesis bifunctional protein ArgJ, mitochondrial (466 aa).

Substrate is bound by residues threonine 194, lysine 223, threonine 234, glutamate 321, asparagine 461, and threonine 466. Threonine 234 (nucleophile) is an active-site residue.

This sequence belongs to the ArgJ family. Heterodimer of an alpha and a beta chain. In terms of processing, the alpha and beta chains are autoproteolytically processed from a single precursor protein within the mitochondrion.

It localises to the mitochondrion matrix. The catalysed reaction is N(2)-acetyl-L-ornithine + L-glutamate = N-acetyl-L-glutamate + L-ornithine. It catalyses the reaction L-glutamate + acetyl-CoA = N-acetyl-L-glutamate + CoA + H(+). It participates in amino-acid biosynthesis; L-arginine biosynthesis; L-ornithine and N-acetyl-L-glutamate from L-glutamate and N(2)-acetyl-L-ornithine (cyclic): step 1/1. It functions in the pathway amino-acid biosynthesis; L-arginine biosynthesis; N(2)-acetyl-L-ornithine from L-glutamate: step 1/4. In terms of biological role, catalyzes two activities which are involved in the cyclic version of arginine biosynthesis: the synthesis of acetylglutamate from glutamate and acetyl-CoA, and of ornithine by transacetylation between acetylornithine and glutamate. This chain is Arginine biosynthesis bifunctional protein ArgJ, mitochondrial, found in Aspergillus fumigatus (strain ATCC MYA-4609 / CBS 101355 / FGSC A1100 / Af293) (Neosartorya fumigata).